The sequence spans 269 residues: Energy-coupling factor transporter ATP-binding protein EcfA1 (269 aa).

In terms of domain architecture, ABC transporter spans 8-242; it reads ITFNHVRFKY…GDGLTEIGLD (235 aa). 42–49 contacts ATP; that stretch reads GHNGSGKS.

The protein belongs to the ABC transporter superfamily. Energy-coupling factor EcfA family. Forms a stable energy-coupling factor (ECF) transporter complex composed of 2 membrane-embedded substrate-binding proteins (S component), 2 ATP-binding proteins (A component) and 2 transmembrane proteins (T component).

It localises to the cell membrane. Functionally, ATP-binding (A) component of a common energy-coupling factor (ECF) ABC-transporter complex. Unlike classic ABC transporters this ECF transporter provides the energy necessary to transport a number of different substrates. In Staphylococcus saprophyticus subsp. saprophyticus (strain ATCC 15305 / DSM 20229 / NCIMB 8711 / NCTC 7292 / S-41), this protein is Energy-coupling factor transporter ATP-binding protein EcfA1.